A 341-amino-acid polypeptide reads, in one-letter code: UDP-3-O-(3-hydroxymyristoyl)glucosamine N-acyltransferase (341 aa).

The Proton acceptor role is filled by His-239.

This sequence belongs to the transferase hexapeptide repeat family. LpxD subfamily. As to quaternary structure, homotrimer.

It catalyses the reaction a UDP-3-O-[(3R)-3-hydroxyacyl]-alpha-D-glucosamine + a (3R)-hydroxyacyl-[ACP] = a UDP-2-N,3-O-bis[(3R)-3-hydroxyacyl]-alpha-D-glucosamine + holo-[ACP] + H(+). It carries out the reaction UDP-3-O-[(3R)-3-hydroxytetradecanoyl]-alpha-D-glucosamine + (3R)-hydroxytetradecanoyl-[ACP] = UDP-2-N,3-O-bis[(3R)-3-hydroxytetradecanoyl]-alpha-D-glucosamine + holo-[ACP] + H(+). The protein operates within glycolipid biosynthesis; lipid IV(A) biosynthesis; lipid IV(A) from (3R)-3-hydroxytetradecanoyl-[acyl-carrier-protein] and UDP-N-acetyl-alpha-D-glucosamine: step 3/6. Its function is as follows. Catalyzes the N-acylation of UDP-3-O-(hydroxytetradecanoyl)glucosamine using 3-hydroxytetradecanoyl-ACP as the acyl donor. Is involved in the biosynthesis of lipid A, a phosphorylated glycolipid that anchors the lipopolysaccharide to the outer membrane of the cell. The polypeptide is UDP-3-O-(3-hydroxymyristoyl)glucosamine N-acyltransferase (Salmonella choleraesuis (strain SC-B67)).